Reading from the N-terminus, the 310-residue chain is HTH-type transcriptional activator TtdR (310 aa).

The HTH lysR-type domain occupies 6–63 (PLAKDLQVLVEIVHSGSFSAAAATLGQTPAFVTKRIQILENTLATTLLNRSARGVALT). A DNA-binding region (H-T-H motif) is located at residues 23–42 (FSAAAATLGQTPAFVTKRIQ).

Belongs to the LysR transcriptional regulatory family.

In terms of biological role, positive regulator required for L-tartrate-dependent anaerobic growth on glycerol. Induces expression of the ttdA-ttdB-ygjE operon. The polypeptide is HTH-type transcriptional activator TtdR (ttdR) (Escherichia coli O6:K15:H31 (strain 536 / UPEC)).